The following is a 60-amino-acid chain: MDAKLLELLVCPVTKGPLRFDREHQELVSRSARLAYPVRDGIPVLLEAEARTLDDDELED.

This sequence belongs to the UPF0434 family.

This is UPF0434 protein Daci_3569 from Delftia acidovorans (strain DSM 14801 / SPH-1).